Reading from the N-terminus, the 116-residue chain is Large ribosomal subunit protein uL18 (116 aa).

It belongs to the universal ribosomal protein uL18 family. As to quaternary structure, part of the 50S ribosomal subunit; part of the 5S rRNA/L5/L18/L25 subcomplex. Contacts the 5S and 23S rRNAs.

In terms of biological role, this is one of the proteins that bind and probably mediate the attachment of the 5S RNA into the large ribosomal subunit, where it forms part of the central protuberance. The polypeptide is Large ribosomal subunit protein uL18 (Alcanivorax borkumensis (strain ATCC 700651 / DSM 11573 / NCIMB 13689 / SK2)).